Here is a 497-residue protein sequence, read N- to C-terminus: MIIYLISLLPIIVATLMLYQRWWRSNIPPGPKPKFLLGNLHQMKPLWTHSFSEWSETYGPIISVWIGSQLTVVVSSSDLARQVLRDKDHQLSNRHRIARMTQTGTDLVWSDYSPHYVKLRKLCTLELFSLKSIENFRSLREMEARSMVVSILKDLMSNSGDDQERKPVIVRKYLAAVVLNTISRLMIGKEFGSEEGKEFKAIVEKEHLLSGSGTILDHVWWLKWVSSWFFSDKEFLAHKDRRTKWFRGAIMVEEDIEIEDHRGFVRKLLVLKEQKELSEETVGGLVWNMLTAGADTTAVVIEWAMAEMIKCPTVQEKAQQELDSVVGSERLMTESDIPILPYLQCVVKEALRLHPSTPLMLPHKASETVWVGGYKVPKGATVYVNVQAIGRDPANWINPYEFRPERFLQEETDVKGRDFRVLPFGSGRRMCPAAQLSMNLMTLVMGNLLHCFSWSSPVPGERIDMSENPGLLCNMRTPLQALALPRAAARAIPLPLD.

A helical membrane pass occupies residues 2–19 (IIYLISLLPIIVATLMLY). Cys-431 contributes to the heme binding site.

The protein belongs to the cytochrome P450 family. Heme serves as cofactor. As to expression, strongly expressed in inflorescence tips, young flower buds, seeds, stamen, tapetum and pollen.

Its subcellular location is the membrane. Acts redundantly with CYP98A9 as tricoumaroylspermidine meta-hydroxylase. Also catalyzes the meta-hydroxylation of the three triferuloylspermidine phenolic rings. Unable to use 5-O-(4-coumaroyl) D-quinate or 5-O-(4-coumaroyl) shikimate as substrates. The chain is Cytochrome P450 98A8 (CYP98A8) from Arabidopsis thaliana (Mouse-ear cress).